The sequence spans 30 residues: Protamine-YII (30 aa).

Residues 1 to 30 are disordered; it reads PRRRTRRASRPVRRRRPRRVSRRRRARRRR.

In terms of tissue distribution, testis.

Its subcellular location is the nucleus. The protein localises to the chromosome. Its function is as follows. Protamines substitute for histones in the chromatin of sperm during the haploid phase of spermatogenesis. They compact sperm DNA into a highly condensed, stable and inactive complex. The polypeptide is Protamine-YII (Clupea harengus (Atlantic herring)).